A 100-amino-acid polypeptide reads, in one-letter code: Urease subunit gamma (100 aa).

Belongs to the urease gamma subunit family. As to quaternary structure, heterotrimer of UreA (gamma), UreB (beta) and UreC (alpha) subunits. Three heterotrimers associate to form the active enzyme.

It is found in the cytoplasm. It catalyses the reaction urea + 2 H2O + H(+) = hydrogencarbonate + 2 NH4(+). The protein operates within nitrogen metabolism; urea degradation; CO(2) and NH(3) from urea (urease route): step 1/1. This is Urease subunit gamma from Shewanella halifaxensis (strain HAW-EB4).